The sequence spans 264 residues: 3-methyl-2-oxobutanoate hydroxymethyltransferase (264 aa).

Mg(2+) is bound by residues D45 and D84. Residues 45–46, D84, and K112 contribute to the 3-methyl-2-oxobutanoate site; that span reads DS. E114 contacts Mg(2+). The Proton acceptor role is filled by E181.

This sequence belongs to the PanB family. Homodecamer; pentamer of dimers. The cofactor is Mg(2+).

The protein resides in the cytoplasm. The enzyme catalyses 3-methyl-2-oxobutanoate + (6R)-5,10-methylene-5,6,7,8-tetrahydrofolate + H2O = 2-dehydropantoate + (6S)-5,6,7,8-tetrahydrofolate. Its pathway is cofactor biosynthesis; (R)-pantothenate biosynthesis; (R)-pantoate from 3-methyl-2-oxobutanoate: step 1/2. Catalyzes the reversible reaction in which hydroxymethyl group from 5,10-methylenetetrahydrofolate is transferred onto alpha-ketoisovalerate to form ketopantoate. The chain is 3-methyl-2-oxobutanoate hydroxymethyltransferase from Vibrio parahaemolyticus serotype O3:K6 (strain RIMD 2210633).